The sequence spans 536 residues: Aminopeptidase (536 aa).

The first 24 residues, 1-24 (MSNKNNLRYALGALALSVSAASLA), serve as a signal peptide directing secretion. The PA domain maps to 152–255 (AGDVTAKVVP…ATYDNGVAWS (104 aa)). Residue Thr196 is modified to Phosphothreonine. Zn(2+)-binding residues include His296 and Asp308. The active-site Proton acceptor is Glu340. Glu341, Asp369, and His467 together coordinate Zn(2+). Residues Cys465 and Cys470 are joined by a disulfide bond.

Belongs to the peptidase M28 family. M28A subfamily. Zn(2+) is required as a cofactor.

The protein localises to the secreted. The catalysed reaction is Release of an N-terminal amino acid, Xaa-|-Yaa-, in which Xaa is preferably Leu, but may be other amino acids including Pro although not Arg or Lys, and Yaa may be Pro. Amino acid amides and methyl esters are also readily hydrolyzed, but rates on arylamides are exceedingly low.. Functionally, a secreted aminopeptidase. Acts on free N-terminal amino groups with a very strong preference for Leu in the first position. In Pseudomonas aeruginosa (strain UCBPP-PA14), this protein is Aminopeptidase.